A 273-amino-acid polypeptide reads, in one-letter code: MPEMPEVENVRATLQELVPGKKIDQVIVRVPKMIVSTPPDEFVHMLVGQEIEGVRRRGKFLLFDLTNCTILSHLRMEGKFRLMDENEEVSKHTHIIFHFEDHTELRFLDVRKFGTMEVTNKYGEGETRSIKKLGPEPLTQAFTLTDFATGVKKTSRAIKTALLDQKLVAGVGNIYADEICFEAKVRPERAANSLSDKEIKRIFKATKSIMTEAVALGGSTVRTYVNSQGKLGQYQNKLKVYGKTDEPCVVCGTPIEKIKLNGRGTHFCPNCQK.

The Schiff-base intermediate with DNA role is filled by Pro-2. Glu-3 acts as the Proton donor in catalysis. Catalysis depends on Lys-59, which acts as the Proton donor; for beta-elimination activity. Positions 92 and 111 each coordinate DNA. The FPG-type zinc finger occupies 239–273 (KVYGKTDEPCVVCGTPIEKIKLNGRGTHFCPNCQK). Arg-263 functions as the Proton donor; for delta-elimination activity in the catalytic mechanism.

It belongs to the FPG family. Monomer. It depends on Zn(2+) as a cofactor.

It catalyses the reaction Hydrolysis of DNA containing ring-opened 7-methylguanine residues, releasing 2,6-diamino-4-hydroxy-5-(N-methyl)formamidopyrimidine.. It carries out the reaction 2'-deoxyribonucleotide-(2'-deoxyribose 5'-phosphate)-2'-deoxyribonucleotide-DNA = a 3'-end 2'-deoxyribonucleotide-(2,3-dehydro-2,3-deoxyribose 5'-phosphate)-DNA + a 5'-end 5'-phospho-2'-deoxyribonucleoside-DNA + H(+). In terms of biological role, involved in base excision repair of DNA damaged by oxidation or by mutagenic agents. Acts as a DNA glycosylase that recognizes and removes damaged bases. Has a preference for oxidized purines, such as 7,8-dihydro-8-oxoguanine (8-oxoG). Has AP (apurinic/apyrimidinic) lyase activity and introduces nicks in the DNA strand. Cleaves the DNA backbone by beta-delta elimination to generate a single-strand break at the site of the removed base with both 3'- and 5'-phosphates. This Listeria monocytogenes serovar 1/2a (strain ATCC BAA-679 / EGD-e) protein is Formamidopyrimidine-DNA glycosylase.